The primary structure comprises 388 residues: Chorismate synthase (388 aa).

2 residues coordinate NADP(+): Arg-39 and Arg-45. Residues 130–132, 251–252, Gly-296, 311–315, and Arg-337 contribute to the FMN site; these read RSS, NA, and KPIPT.

It belongs to the chorismate synthase family. In terms of assembly, homotetramer. FMNH2 is required as a cofactor.

The catalysed reaction is 5-O-(1-carboxyvinyl)-3-phosphoshikimate = chorismate + phosphate. Its pathway is metabolic intermediate biosynthesis; chorismate biosynthesis; chorismate from D-erythrose 4-phosphate and phosphoenolpyruvate: step 7/7. In terms of biological role, catalyzes the anti-1,4-elimination of the C-3 phosphate and the C-6 proR hydrogen from 5-enolpyruvylshikimate-3-phosphate (EPSP) to yield chorismate, which is the branch point compound that serves as the starting substrate for the three terminal pathways of aromatic amino acid biosynthesis. This reaction introduces a second double bond into the aromatic ring system. The polypeptide is Chorismate synthase (Streptococcus pyogenes serotype M49 (strain NZ131)).